The sequence spans 277 residues: Caspase-3 (277 aa).

M1 is subject to N-acetylmethionine. Propeptides lie at residues 1-9 (MDNNETSVD) and 10-28 (SKSI…KSMD). At K11 the chain carries N6-acetyllysine. S26 is subject to Phosphoserine. Residues H121 and C163 contribute to the active site. Residue C163 is modified to S-nitrosocysteine; in inhibited form.

This sequence belongs to the peptidase C14A family. Heterotetramer that consists of two anti-parallel arranged heterodimers, each one formed by a 17 kDa (p17) and a 12 kDa (p12) subunit. Interacts with BIRC6/bruce. In terms of processing, cleavage by granzyme B, caspase-6, caspase-8 and caspase-10 generates the two active subunits. Additional processing of the propeptides is likely due to the autocatalytic activity of the activated protease. Active heterodimers between the small subunit of caspase-7 protease and the large subunit of caspase-3 also occur and vice versa. S-nitrosylated on its catalytic site cysteine in unstimulated cell lines and denitrosylated upon activation of the Fas apoptotic pathway, associated with an increase in intracellular caspase activity. Fas therefore activates caspase-3 not only by inducing the cleavage of the caspase zymogen to its active subunits, but also by stimulating the denitrosylation of its active site thiol. Post-translationally, ubiquitinated by BIRC6; this activity is inhibited by DIABLO/SMAC. Expressed in heart, brain, liver, and muscle but not in kidney or testis.

The protein resides in the cytoplasm. It carries out the reaction Strict requirement for an Asp residue at positions P1 and P4. It has a preferred cleavage sequence of Asp-Xaa-Xaa-Asp-|- with a hydrophobic amino-acid residue at P2 and a hydrophilic amino-acid residue at P3, although Val or Ala are also accepted at this position.. With respect to regulation, inhibited by BIRC6; following inhibition of BIRC6-caspase binding by DIABLO/SMAC, BIRC6 is subjected to caspase cleavage, leading to an increase in active caspases. In terms of biological role, involved in the activation cascade of caspases responsible for apoptosis execution. At the onset of apoptosis, it proteolytically cleaves poly(ADP-ribose) polymerase PARP1 at a '216-Asp-|-Gly-217' bond. Cleaves and activates sterol regulatory element binding proteins (SREBPs) between the basic helix-loop-helix leucine zipper domain and the membrane attachment domain. Cleaves and activates caspase-6, -7 and -9 (CASP6, CASP7 and CASP9, respectively). Cleaves and inactivates interleukin-18 (IL18). Triggers cell adhesion in sympathetic neurons through RET cleavage. Cleaves IL-1 beta between an Asp and an Ala, releasing the mature cytokine which is involved in a variety of inflammatory processes. Cleaves and inhibits serine/threonine-protein kinase AKT1 in response to oxidative stress. Acts as an inhibitor of type I interferon production during virus-induced apoptosis by mediating cleavage of antiviral proteins CGAS, IRF3 and MAVS, thereby preventing cytokine overproduction. Also involved in pyroptosis by mediating cleavage and activation of gasdermin-E (GSDME). Cleaves XRCC4 and phospholipid scramblase proteins XKR4, XKR8 and XKR9, leading to promote phosphatidylserine exposure on apoptotic cell surface. Cleaves BIRC6 following inhibition of BIRC6-caspase binding by DIABLO/SMAC. This is Caspase-3 (Casp3) from Rattus norvegicus (Rat).